Here is a 98-residue protein sequence, read N- to C-terminus: EKC/KEOPS complex subunit GON7 (98 aa).

Methionine 1 bears the N-acetylmethionine mark. The disordered stretch occupies residues 55–98; that stretch reads DAQGLAEDPDDALDGDDEDDAEDENNSGRTNSDGPSAKRPKPAS. A compositionally biased stretch (acidic residues) spans 61-79; it reads EDPDDALDGDDEDDAEDEN.

In terms of assembly, component of the EKC/KEOPS complex composed of at least GON7, TP53RK, TPRKB, OSGEP and LAGE3; the whole complex dimerizes.

The protein resides in the nucleus. Its function is as follows. Component of the EKC/KEOPS complex that is required for the formation of a threonylcarbamoyl group on adenosine at position 37 (t(6)A37) in tRNAs that read codons beginning with adenine. The complex is probably involved in the transfer of the threonylcarbamoyl moiety of threonylcarbamoyl-AMP (TC-AMP) to the N6 group of A37. GON7 plays a supporting role to the catalytic subunit OSGEP in the complex. The polypeptide is EKC/KEOPS complex subunit GON7 (Mus musculus (Mouse)).